The primary structure comprises 529 residues: GMP synthase [glutamine-hydrolyzing] (529 aa).

The Glutamine amidotransferase type-1 domain maps to threonine 17 to asparagine 206. Residue cysteine 93 is the Nucleophile of the active site. Catalysis depends on residues histidine 180 and glutamate 182. The GMPS ATP-PPase domain maps to tryptophan 207–arginine 404. Serine 235–threonine 241 provides a ligand contact to ATP. XMP contacts are provided by arginine 308, aspartate 466, lysine 521, and glutamate 527.

In terms of assembly, homodimer. The cofactor is Mg(2+).

The protein localises to the cytoplasm. It localises to the cytosol. The enzyme catalyses XMP + L-glutamine + ATP + H2O = GMP + L-glutamate + AMP + diphosphate + 2 H(+). The protein operates within purine metabolism; GMP biosynthesis; GMP from XMP (L-Gln route): step 1/1. Functionally, catalyzes the conversion of xanthine monophosphate (XMP) to GMP in the presence of glutamine and ATP through an adenyl-XMP intermediate. In Debaryomyces hansenii (strain ATCC 36239 / CBS 767 / BCRC 21394 / JCM 1990 / NBRC 0083 / IGC 2968) (Yeast), this protein is GMP synthase [glutamine-hydrolyzing] (GUA1).